The chain runs to 495 residues: Oxidoreductase AflY (495 aa).

Positions 1–22 (MGSHAPAVAGKPDPKKGPYQAT) are disordered.

Belongs to the questin oxidase family.

It participates in mycotoxin biosynthesis; aflatoxin biosynthesis. Its function is as follows. Oxidoreductase; part of the gene cluster that mediates the biosynthesis of aflatoxins, a group of polyketide-derived furanocoumarins, and part of the most toxic and carcinogenic compounds among the known mycotoxins. The four major aflatoxins produced by A.parasiticus are aflatoxin B1 (AFB1), aflatoxin B2 (AFB2), aflatoxin G1 (AFG1) and aflatoxin G2 (AFG2). Within the aflatoxin pathway, the oxidoreductase aflY seems to be involved in the conversion of versicolorin A (VERA) to demethylsterigmatocystin (DMST), through probable Baeyer-Villiger oxidation required for the formation of the xanthone ring. The biosynthesis of aflatoxins begins with the norsolorinic acid synthase aflC that combines a hexanoyl starter unit produced by the fatty acid synthase aflA/aflB and 7 malonyl-CoA extender units to synthesize the precursor NOR. The second step is the conversion of NOR to averantin and requires the norsolorinic acid ketoreductase aflD, which catalyzes the dehydration of norsolorinic acid to form (1'S)-averantin. The norsolorinic acid reductases aflE and aflF may also play a role in the conversion of NOR to AVN. The cytochrome P450 monooxygenase aflG then catalyzes the hydroxylation of AVN to 5'hydroxyaverantin (HAVN). The next step is performed by the 5'-hydroxyaverantin dehydrogenase aflH that transforms HAVN to 5'-oxoaverantin (OAVN) which is further converted to averufin (AVF) by aflK that plays a dual role in the pathway, as a 5'-oxoaverantin cyclase that mediates conversion of 5'-oxoaverantin, as well as a versicolorin B synthase in a later step in the pathway. The averufin oxidase aflI catalyzes the conversion of AVF to versiconal hemiacetal acetate (VHA). VHA is then the substrate for the versiconal hemiacetal acetate esterase aflJ to yield versiconal (VAL). Versicolorin B synthase aflK then converts VAL to versicolorin B (VERB) by closing the bisfuran ring of aflatoxin which is required for DNA-binding, thus giving to aflatoxin its activity as a mutagen. Then, the activity of the versicolorin B desaturase aflL leads to versicolorin A (VERA). A branch point starts from VERB since it can also be converted to dihydrodemethylsterigmatocystin (DMDHST), probably also by aflL, VERA being a precursor for aflatoxins B1 and G1, and DMDHST for aflatoxins B2 and G2. Next, the versicolorin reductase aflM and the cytochrome P450 monooxygenase aflN are involved in conversion of VERA to demethylsterigmatocystin (DMST). AflX and aflY seem also involved in this step, through probable aflX-mediated epoxide ring-opening step following versicolorin A oxidation and aflY-mediated Baeyer-Villiger oxidation required for the formation of the xanthone ring. The methyltransferase aflO then leads to the modification of DMST to sterigmatocystin (ST), and of DMDHST to dihydrosterigmatocystin (DHST). Both ST and DHST are then substrates of the O-methyltransferase aflP to yield O-methylsterigmatocystin (OMST) and dihydro-O-methylsterigmatocystin (DHOMST), respectively. Finally OMST is converted to aflatoxins B1 and G1, and DHOMST to aflatoxins B2 and G2, via the action of several enzymes including O-methylsterigmatocystin oxidoreductase aflQ, the cytochrome P450 monooxygenase aflU, but also the NADH-dependent flavin oxidoreductase nadA which is specifically required for the synthesis of AFG1. The sequence is that of Oxidoreductase AflY from Aspergillus parasiticus (strain ATCC 56775 / NRRL 5862 / SRRC 143 / SU-1).